A 339-amino-acid polypeptide reads, in one-letter code: MRVLGVESSCDETGLAIYDSAQGLMAHALHSQVATHAEYGGVVPELASRDHVRRVVPLTRRVLAEAGCRLRDIDAVAYTRGPGLVGALMVGAGMARSLAWGLGVPALGVHHMEAHLLAPMLEPNPPAFPFVALLVSGGHTLLVQVAGVGRYRVLGETLDDAAGEAFDKTAKLLGLPYPGGPELEKLAESGDPGRYRFPRPMTDRPGLDFSFSGLKTRVLQTVQQSREADRADIAAAFQSAVVDTLVIKCRRALRATGSQRLVISGGVGANGLLREQMRAMADQAGASLHYPRLALCTDNGAMVAYTGWCRLSEGQHDDLDFSVTARWPLADLTPPGQPV.

2 residues coordinate Fe cation: His111 and His115. Substrate contacts are provided by residues 134 to 138 (LVSGG), Asp167, Gly180, and Asn270. Asp298 serves as a coordination point for Fe cation.

The protein belongs to the KAE1 / TsaD family. Fe(2+) is required as a cofactor.

It localises to the cytoplasm. It catalyses the reaction L-threonylcarbamoyladenylate + adenosine(37) in tRNA = N(6)-L-threonylcarbamoyladenosine(37) in tRNA + AMP + H(+). In terms of biological role, required for the formation of a threonylcarbamoyl group on adenosine at position 37 (t(6)A37) in tRNAs that read codons beginning with adenine. Is involved in the transfer of the threonylcarbamoyl moiety of threonylcarbamoyl-AMP (TC-AMP) to the N6 group of A37, together with TsaE and TsaB. TsaD likely plays a direct catalytic role in this reaction. This chain is tRNA N6-adenosine threonylcarbamoyltransferase, found in Alkalilimnicola ehrlichii (strain ATCC BAA-1101 / DSM 17681 / MLHE-1).